The primary structure comprises 222 residues: Superoxide dismutase [Cu-Zn], chloroplastic (222 aa).

Residues 1-68 constitute a chloroplast transit peptide; it reads MAAHTILASA…AASKPLTIVA (68 aa). H114, H116, and H131 together coordinate Cu cation. C125 and C214 are oxidised to a cystine. H131, H139, H148, and D151 together coordinate Zn(2+). Position 188 (H188) interacts with Cu cation.

The protein belongs to the Cu-Zn superoxide dismutase family. As to quaternary structure, homotetramer. It depends on Cu cation as a cofactor. The cofactor is Zn(2+).

It localises to the plastid. The protein resides in the chloroplast. The enzyme catalyses 2 superoxide + 2 H(+) = H2O2 + O2. In terms of biological role, destroys radicals which are normally produced within the cells and which are toxic to biological systems. The protein is Superoxide dismutase [Cu-Zn], chloroplastic (SODCP) of Spinacia oleracea (Spinach).